A 955-amino-acid polypeptide reads, in one-letter code: MLIESMGLACFARPLQWFKSQWLWLLLSIAAFCLLMRVQVEWLWFGQFDWQGMLLRRWLWQLGGLLLALLVVATCQLWQRNWIKLEVASNLGESSLSLHGWRYGLGLLGCFVVVVGDLVLLSRLAWLACFKPFDLGHWWSEPFEDIWALVIPLSCVFISICVMLGNARGGRIAHLIGCFCFSISIARGWGLWALALAIPPTGIKEPLLGGDVSFGLGQFPALAFALVVLLAQLILTTCTTIWMKLAQPESLSDWVFKGLSPRQCNFLRPLIGIILLTLSALLWLSRHELLWTQNGTVAGAGWLDAHLILPLRSLASLAILVFAFLVIPFTWIQQRRLLRLIASIIGVGAILLEVLLAPFVQWMVVKPRELKLETPYIIRAIKATRKAFQLDSITTTLINPQPQLTQLDLEQGASTLRNIRLWDSQPLLATNRQLQQLRVYYRFSNAAVDRYRFVPDVANRQQVMITARELDQAALPKRSRTWLNRHFVFTHGYGFTLSPVNTRAPDGLPDYFISDLGTSTRLEGSSELGITREDVKEAVPIGRAALYFGMLPSPYALAPSKLKELDYPVGDKNIYNHYLGSGGVPVGQPWQQLAAAMYLFEPRLLNTGSLTINSKLLIRREVRQRVRAIAPFLEVIGDPYLVSTSVSSKDLNYEAKQNQYWIVEAYTSSRTYPYAANLPDGRPLRYLRNSVKAIVDAYSGRVHLYVSEPRDPIILGWQRLFPDLFKPLEEMPSSLREHLKVPTDLFNVQVQQLLRYHVTDPRIFYSGDDVWQVPKELYGRRQVPVDPYHITAQLGTQESSEFLLLQPLTPLARPNLSAWLAARSDGEHYGKLVLLRFPSQTPIFGPEQIQALINQDPQISQQFGLWDRAGSEVVQGNLLVVPLGKALLYVEPVYLRARQGGLPTLTRVVVSDGKRIAMAEDLGEGLRALVDGSSNKAVYLNRNDLPPIKAADQLN.

The next 9 membrane-spanning stretches (helical) occupy residues 25 to 45 (LLLS…WLWF), 58 to 78 (WLWQ…CQLW), 107 to 127 (LLGC…LAWL), 146 to 166 (IWAL…MLGN), 178 to 198 (CFCF…ALAI), 214 to 234 (FGLG…AQLI), 264 to 284 (CNFL…LLWL), 313 to 333 (SLAS…TWIQ), and 340 to 360 (LIAS…APFV).

The protein belongs to the UPF0182 family.

It is found in the cell membrane. This Prochlorococcus marinus (strain MIT 9313) protein is UPF0182 protein PMT_0755.